Here is a 339-residue protein sequence, read N- to C-terminus: Annexin A2 (339 aa).

Position 2 is an N-acetylserine (S2). Positions 2–24 (STVHEILCKLSLEGDHSTPASAY) are S100A10-binding site. Y24 is modified (phosphotyrosine; by SRC). Phosphoserine; by PKC is present on S26. 2 Annexin repeats span residues 33–104 (FDAE…GLLK) and 105–176 (TPAQ…ALAK). An N6-acetyllysine; alternate modification is found at K49. A Glycyl lysine isopeptide (Lys-Gly) (interchain with G-Cter in SUMO1); alternate cross-link involves residue K49. A Glycyl lysine isopeptide (Lys-Gly) (interchain with G-Cter in SUMO2); alternate cross-link involves residue K49. K152 carries the post-translational modification N6-acetyllysine. S184 carries the phosphoserine modification. Annexin repeat units follow at residues 189–261 (ELID…NLVQ) and 265–336 (NKPL…YLCG). Y199 carries the post-translational modification Phosphotyrosine. K227 carries the N6-acetyllysine modification.

Belongs to the annexin family. As to quaternary structure, heterotetramer containing 2 light chains of S100A10/p11 and 2 heavy chains of ANXA2/p36. Interacts with ATP1B1. Interacts with DYSF. Interacts with COCH. Interacts (via repeat Annexin 1) with PCSK9 (via the C-terminal domain); the interaction inhibits the degradation of LDLR. Interacts with CEACAM1 (via the cytoplasmic domain); this interaction is regulated by phosphorylation of CEACAM1. Interacts with APPL2 and APPL1; targets APPL2 to endosomes and acting in parallel to RAB5A. Interacts with S100A4. May interact with UBAP2. Interacts with PLEKHG4B; this interaction is required for PLEKHG4B localization to cell-cell adhesions. In terms of assembly, (Microbial infection) Interacts with classical swine fever virus envelope glycoprotein E2. ISGylated.

It localises to the secreted. The protein resides in the extracellular space. Its subcellular location is the extracellular matrix. It is found in the basement membrane. The protein localises to the melanosome. In terms of biological role, calcium-regulated membrane-binding protein whose affinity for calcium is greatly enhanced by anionic phospholipids. It binds two calcium ions with high affinity. May be involved in heat-stress response. Inhibits PCSK9-enhanced LDLR degradation, probably reduces PCSK9 protein levels via a translational mechanism but also competes with LDLR for binding with PCSK9. Binds to endosomes damaged by phagocytosis of particulate wear debris and participates in endosomal membrane stabilization, thereby limiting NLRP3 inflammasome activation. Required for endothelial cell surface plasmin generation and may support fibrinolytic surveillance and neoangiogenesis. Functionally, (Microbial infection) May serve as a receptor for classical swine fever virus (CSFV). Promotes CSFV infection. In Sus scrofa (Pig), this protein is Annexin A2 (ANXA2).